We begin with the raw amino-acid sequence, 335 residues long: Zinc-type alcohol dehydrogenase-like protein SAV2186 (335 aa).

The protein belongs to the zinc-containing alcohol dehydrogenase family. Quinone oxidoreductase subfamily.

This Staphylococcus aureus (strain Mu50 / ATCC 700699) protein is Zinc-type alcohol dehydrogenase-like protein SAV2186.